A 613-amino-acid chain; its full sequence is Epsin-2 (613 aa).

Positions 11–143 (NMMKGYSSTQ…NDEERLREER (133 aa)) constitute an ENTH domain. 3 disordered regions span residues 140–208 (REER…DDED), 323–351 (TAANMQQQQQQPADFQQPLPTGSNNPFSM), and 356–375 (RQKQEQQHAQLQRQQEEARQ). A compositionally biased stretch (basic residues) spans 148–167 (RNRRANRAARPRPRRQRTRS). The residue at position 165 (Thr-165) is a Phosphothreonine. The residue at position 167 (Ser-167) is a Phosphoserine. 2 UIM domains span residues 175 to 194 (SYQDDLEKALEESRITAQED) and 206 to 225 (DEDPDFQAALQLSKEEEELK). A compositionally biased stretch (basic and acidic residues) spans 179 to 188 (DLEKALEESR). Low complexity predominate over residues 323-339 (TAANMQQQQQQPADFQQ). The span at 340–350 (PLPTGSNNPFS) shows a compositional bias: polar residues. Residue Lys-426 forms a Glycyl lysine isopeptide (Lys-Gly) (interchain with G-Cter in ubiquitin) linkage. Residue Thr-430 is modified to Phosphothreonine. Phosphoserine is present on Ser-434. Thr-450, Thr-468, and Thr-470 each carry phosphothreonine. Positions 471-512 (GTFINSQGTGYKQVTNEPKNNPFLSNQYTGLPSTNIVPTQTG) are enriched in polar residues. The tract at residues 471-613 (GTFINSQGTG…PDQGVSLIDL (143 aa)) is disordered. Residues 526–600 (SPQQNPTGIS…QQQQQQQQQQ (75 aa)) show a composition bias toward low complexity.

The protein belongs to the epsin family. Post-translationally, phosphorylated by PRK1.

Its subcellular location is the cytoplasm. It localises to the membrane. Functionally, binds to membranes enriched in phosphatidylinositol 3,5-bisphosphate (PtdIns(3,5)P2) and phosphatidylinositol 4,5-bisphosphate (PtdIns(4,5)P2). Required for endocytosis and localization of actin. In Saccharomyces cerevisiae (strain ATCC 204508 / S288c) (Baker's yeast), this protein is Epsin-2 (ENT2).